The primary structure comprises 279 residues: Large ribosomal subunit protein uL2 (279 aa).

The segment at 224 to 279 is disordered; that stretch reads AMNPIDHPHGGGEGRTSGGRHPVTPWGKGTKGNRTRKSKASDKLIVRSRHAKKKGR. Positions 269 to 279 are enriched in basic residues; it reads VRSRHAKKKGR.

This sequence belongs to the universal ribosomal protein uL2 family. Part of the 50S ribosomal subunit. Forms a bridge to the 30S subunit in the 70S ribosome.

Its function is as follows. One of the primary rRNA binding proteins. Required for association of the 30S and 50S subunits to form the 70S ribosome, for tRNA binding and peptide bond formation. It has been suggested to have peptidyltransferase activity; this is somewhat controversial. Makes several contacts with the 16S rRNA in the 70S ribosome. This is Large ribosomal subunit protein uL2 from Cereibacter sphaeroides (strain ATCC 17025 / ATH 2.4.3) (Rhodobacter sphaeroides).